We begin with the raw amino-acid sequence, 188 residues long: Large ribosomal subunit protein eL18 (188 aa).

Residues 147–188 (EANKHFGPAPGVPHSHTKAHVRSKGRQFERARGRRTSKGYKK) are disordered. Composition is skewed to basic residues over residues 161–171 (SHTKAHVRSKG) and 178–188 (RGRRTSKGYKK).

It belongs to the eukaryotic ribosomal protein eL18 family.

The protein resides in the cytoplasm. This is Large ribosomal subunit protein eL18 (RpL18) from Diaphorina citri (Asian citrus psyllid).